Reading from the N-terminus, the 123-residue chain is Large ribosomal subunit protein bL12 (123 aa).

The protein belongs to the bacterial ribosomal protein bL12 family. Homodimer. Part of the ribosomal stalk of the 50S ribosomal subunit. Forms a multimeric L10(L12)X complex, where L10 forms an elongated spine to which 2 to 4 L12 dimers bind in a sequential fashion. Binds GTP-bound translation factors.

Its function is as follows. Forms part of the ribosomal stalk which helps the ribosome interact with GTP-bound translation factors. Is thus essential for accurate translation. The polypeptide is Large ribosomal subunit protein bL12 (Salmonella arizonae (strain ATCC BAA-731 / CDC346-86 / RSK2980)).